The primary structure comprises 239 residues: Phosducin-like protein 3 (239 aa).

A disordered region spans residues 16-37 (KKGILPPKETPVEEEEDEQLHL). In terms of domain architecture, Phosducin spans 28 to 201 (EEEEDEQLHL…LEWRLSESGA (174 aa)). At S41 the chain carries Phosphoserine. The thioredoxin fold stretch occupies residues 89 to 239 (FGELKEISGQ…RDGEEDSDED (151 aa)). Residues 217 to 227 (QLMTSIRCSAN) are compositionally biased toward polar residues. Residues 217–239 (QLMTSIRCSANTHRDGEEDSDED) are disordered.

It belongs to the phosducin family. Interacts (via thioredoxin fold region) with kdr/vegfr2 (via juxtamembrane domain). As to expression, expressed in endothelial cells.

It is found in the cytoplasm. The protein localises to the perinuclear region. The protein resides in the endoplasmic reticulum. Acts as a chaperone for the angiogenic VEGF receptor KDR/VEGFR2, increasing its abundance by inhibiting its ubiquitination and degradation. Inhibits the folding activity of the chaperonin-containing T-complex (CCT) which leads to inhibition of cytoskeletal actin folding. Acts as a chaperone during heat shock alongside HSP90 and HSP40/70 chaperone complexes. Modulates the activation of caspases during apoptosis. The sequence is that of Phosducin-like protein 3 from Danio rerio (Zebrafish).